Reading from the N-terminus, the 199-residue chain is Chaperone protein TorD (199 aa).

The protein belongs to the TorD/DmsD family. TorD subfamily.

The protein resides in the cytoplasm. Involved in the biogenesis of TorA. Acts on TorA before the insertion of the molybdenum cofactor and, as a result, probably favors a conformation of the apoenzyme that is competent for acquiring the cofactor. The protein is Chaperone protein TorD of Escherichia coli O8 (strain IAI1).